The chain runs to 355 residues: Uroporphyrinogen decarboxylase (355 aa).

Substrate contacts are provided by residues 36–40 (RQAGR), D85, Y160, S215, and H334.

It belongs to the uroporphyrinogen decarboxylase family. In terms of assembly, homodimer.

It localises to the cytoplasm. The catalysed reaction is uroporphyrinogen III + 4 H(+) = coproporphyrinogen III + 4 CO2. It functions in the pathway porphyrin-containing compound metabolism; protoporphyrin-IX biosynthesis; coproporphyrinogen-III from 5-aminolevulinate: step 4/4. In terms of biological role, catalyzes the decarboxylation of four acetate groups of uroporphyrinogen-III to yield coproporphyrinogen-III. This is Uroporphyrinogen decarboxylase from Rhodococcus opacus (strain B4).